Here is a 68-residue protein sequence, read N- to C-terminus: Small cysteine-rich protein 2 (68 aa).

The first 24 residues, 1-24, serve as a signal peptide directing secretion; the sequence is MAVKFHLCLLLIILVGMGAHVAFA.

Belongs to the Cnidaria small cysteine-rich protein (SCRiP) family. gamma subfamily. Contains 4 disulfide bonds.

Its subcellular location is the secreted. The protein localises to the nematocyst. Functionally, induces neurotoxic symptoms on zebrafish. Has also been claimed to be implied in calcification, but tests on homolog proteins suggest that proteins of this family have a neurotoxic function and not a calcification function. The polypeptide is Small cysteine-rich protein 2 (Orbicella faveolata (Mountainous star coral)).